The primary structure comprises 85 residues: Antifungal protein (85 aa).

The N-terminal stretch at 1 to 18 (MVKLFVIVILALIAVAFG) is a signal peptide. Tandem repeats lie at residues 19–25 (QHGHGGQ) and 67–73 (QHGHGGQ). Residues 19-73 (QHGHGGQDQHGYGHGQQAVYGKGHEGHGVNNLGQDGHGQHGYAHGHSDQHGHGGQ) are 2 X 7 AA repeats of Q-H-G-H-G-G-Q. Over residues 22–32 (HGGQDQHGYGH) the composition is skewed to gly residues. Positions 22–85 (HGGQDQHGYG…QHDGYKNRGY (64 aa)) are disordered. Over residues 63–85 (GHSDQHGHGGQHGQHDGYKNRGY) the composition is skewed to basic and acidic residues.

As to quaternary structure, homodimer. In terms of processing, the N-terminus is blocked. Hemolymph.

Its function is as follows. This protein inhibits the growth of a variety of fungal species. The antifungal activity of this protein is enhanced by the presence of sarcotoxin IA. The chain is Antifungal protein from Sarcophaga peregrina (Flesh fly).